The sequence spans 236 residues: UPF0173 metal-dependent hydrolase Mnod_3315 (236 aa).

It belongs to the UPF0173 family.

This is UPF0173 metal-dependent hydrolase Mnod_3315 from Methylobacterium nodulans (strain LMG 21967 / CNCM I-2342 / ORS 2060).